Reading from the N-terminus, the 324-residue chain is Putative glycosyltransferase R655 (324 aa).

Belongs to the glycosyltransferase 25 family.

In Acanthamoeba polyphaga (Amoeba), this protein is Putative glycosyltransferase R655.